Reading from the N-terminus, the 95-residue chain is U8-barytoxin-Tl1a (95 aa).

The first 21 residues, 1-21, serve as a signal peptide directing secretion; it reads MKTLVLVAVLGLASLYLLSYA. Residues 22-50 constitute a propeptide that is removed on maturation; sequence SEVQQLSVAEEEFGALIDAFGGLLETEER. 3 cysteine pairs are disulfide-bonded: C57-C71, C64-C76, and C70-C86.

The protein belongs to the neurotoxin 10 (Hwtx-1) family. 26 (ICK-1) subfamily. In terms of tissue distribution, expressed by the venom gland.

The protein localises to the secreted. In terms of biological role, ion channel inhibitor. This chain is U8-barytoxin-Tl1a, found in Trittame loki (Brush-footed trapdoor spider).